Here is a 945-residue protein sequence, read N- to C-terminus: Kinesin-like protein CIN8 (945 aa).

The 388-residue stretch at 22 to 409 (NITVAVRCRG…LEYAAKAKNI (388 aa)) folds into the Kinesin motor domain. 114–121 (GMTSTGKT) serves as a coordination point for ATP. The segment at 190–243 (IFDSSSMNHSSRASSQSNSPREPEVAHNGFSRRRQRPPPVKANRMSATKQQLSE) is disordered. Low complexity predominate over residues 193-208 (SSSMNHSSRASSQSNS). The span at 234–243 (MSATKQQLSE) shows a compositional bias: polar residues. 2 coiled-coil regions span residues 450–562 (MSHE…DIKE) and 634–675 (LKEF…YLDQ).

The protein belongs to the TRAFAC class myosin-kinesin ATPase superfamily. Kinesin family. BimC subfamily.

It is found in the cytoplasm. Its subcellular location is the cytoskeleton. It localises to the spindle. Its function is as follows. Elongates the mitotic spindle by interacting with spindle microtubules to generate an outward force pushing spindle poles apart. Following spindle assembly, CIN8 and KIP1 apparently act to oppose a force, possibly generated by KAR3, that draws separated poles back together. The polypeptide is Kinesin-like protein CIN8 (CIN8) (Eremothecium gossypii (strain ATCC 10895 / CBS 109.51 / FGSC 9923 / NRRL Y-1056) (Yeast)).